A 203-amino-acid polypeptide reads, in one-letter code: Endo-type membrane-bound lytic murein transglycosylase A (203 aa).

A signal peptide spans 1–15 (MKLRWFAFLIVLLAG). Cys16 carries the N-palmitoyl cysteine lipid modification. Cys16 carries S-diacylglycerol cysteine lipidation.

Belongs to the transglycosylase Slt family.

It is found in the cell outer membrane. It catalyses the reaction Endolytic cleavage of the (1-&gt;4)-beta-glycosidic linkage between N-acetylmuramic acid (MurNAc) and N-acetylglucosamine (GlcNAc) residues in peptidoglycan with concomitant formation of a 1,6-anhydrobond in the MurNAc residue.. Its function is as follows. Murein-degrading enzyme. May play a role in recycling of muropeptides during cell elongation and/or cell division. Preferentially cleaves at a distance of more than two disaccharide units from the ends of the glycan chain. In Escherichia coli (strain K12 / MC4100 / BW2952), this protein is Endo-type membrane-bound lytic murein transglycosylase A.